The chain runs to 600 residues: Single-strand DNA endonuclease 1 (600 aa).

Residues 1–97 (MGVKYLWDVL…KRRLKARFEI (97 aa)) form an N-domain region. An XPG-N domain region spans residues 2–97 (GVKYLWDVLE…KRRLKARFEI (96 aa)). Residues Asp30, Asp76, Glu142, Glu144, Asp163, Asp165, and Asp215 each contribute to the Mg(2+) site. Positions 130 to 215 (STLGILCLDG…IALALLLGSD (86 aa)) are XPG-I domain. I-domain regions lie at residues 130-218 (STLG…DYSQ) and 130-219 (STLG…YSQG). The interval 215 to 353 (DYSQGVRGLR…ILPKVAERNL (139 aa)) is 5'-3' exonuclease domain. The disordered stretch occupies residues 433–458 (MAAKKKKPKPKQKQKETSSPTKSSSL). Residues 435-444 (AKKKKPKPKQ) show a composition bias toward basic residues.

Belongs to the XPG/RAD2 endonuclease family. GEN subfamily. The cofactor is Mg(2+).

The protein localises to the nucleus. In terms of biological role, endonuclease which cleaves flap structures at the junction between single-stranded DNA and double-stranded DNA with a specific cleavage site in the 5' overhang strand exactly one nucleotide 3' of the branch point. Structure- and sequence-specific nuclease that resolves holliday junctions (HJs) by symmetrically oriented incisions in two opposing strands near the junction point, thus leading to ligatable products; HJs are physical links between homologous DNA molecules that arise as central intermediary structures during homologous recombination and repair in meiotic and somatic cells. Structure-specific nuclease with 5'-flap endonuclease activity, preferentially cleaving static flaps 5' overhang strand exactly one nucleotide in the 3' direction of the branch point and, to lower extent, on the two neighboring positions. Also able to cleave double-stranded flap strand 1 one nucleotide in the 3' direction of the branch point. Together with MUS81, essential for the resolution of toxic replication structures to ensure genome stability, and to maintain telomere integrity and replication. This Arabidopsis thaliana (Mouse-ear cress) protein is Single-strand DNA endonuclease 1.